A 385-amino-acid chain; its full sequence is MDEFPTEYFLGTAVRLLENVKYRDSNYTREERIENLSYANNKAAAHFAQERQQRILKVNPKRLEASLRTIVGMVVYSWVKVSKELMADLSIHYTYTLILDDSEDDPHNNMLTFFDDLQAGREQKHPWWMLVNEHFPNVLRHFGPFCSLNLIRSTLDFFEGCWIEQYNFHGFPGSYDFPGFLRRMNGLGHCVGGSLWPKELFDEQKHFLEITSAVAQMENWMVWVNDLMSFYKEFDDPRDQTSLVKNYVVCDEISLTQALEKLTVDTLTSSEQMMEVFSDKDAKLMETIECFMHGYITWHLCDHRYRLKEVYEGTMHIETEDAIKFRKFYGQAAKVGAIEHEEWAFPTVAERIEVRLAEEKAAKDGQAVLTSAEPAVPQAAQEVLA.

Belongs to the trichodiene synthase family.

It catalyses the reaction (2E,6E)-farnesyl diphosphate = trichodiene + diphosphate. The protein operates within sesquiterpene biosynthesis; trichothecene biosynthesis. Functionally, TS is a member of the terpene cyclase group of enzymes. It catalyzes the isomerization and cyclization of farnesyl pyro-phosphate to form trichodiene, the first cyclic intermediate in the biosynthetic pathway for trichothecenes. It serves to branch trichothecene biosynthesis from the isoprenoid pathway. The sequence is that of Trichodiene synthase (TRI5) from Paramyrothecium roridum (Myrothecium leaf spot fungus).